The chain runs to 101 residues: NAD(P)H-quinone oxidoreductase subunit 4L, chloroplastic (101 aa).

The next 3 membrane-spanning stretches (helical) occupy residues isoleucine 2–isoleucine 22, methionine 32–phenylalanine 52, and isoleucine 61–valine 81.

This sequence belongs to the complex I subunit 4L family. As to quaternary structure, NDH is composed of at least 16 different subunits, 5 of which are encoded in the nucleus.

Its subcellular location is the plastid. It localises to the chloroplast thylakoid membrane. It catalyses the reaction a plastoquinone + NADH + (n+1) H(+)(in) = a plastoquinol + NAD(+) + n H(+)(out). The catalysed reaction is a plastoquinone + NADPH + (n+1) H(+)(in) = a plastoquinol + NADP(+) + n H(+)(out). NDH shuttles electrons from NAD(P)H:plastoquinone, via FMN and iron-sulfur (Fe-S) centers, to quinones in the photosynthetic chain and possibly in a chloroplast respiratory chain. The immediate electron acceptor for the enzyme in this species is believed to be plastoquinone. Couples the redox reaction to proton translocation, and thus conserves the redox energy in a proton gradient. This chain is NAD(P)H-quinone oxidoreductase subunit 4L, chloroplastic, found in Draba nemorosa (Woodland whitlowgrass).